The following is a 40-amino-acid chain: Photosystem II reaction center protein J (40 aa).

The chain crosses the membrane as a helical span at residues 8-28; that stretch reads IPLWLIGTVTGIAVIGLIGVF.

This sequence belongs to the PsbJ family. In terms of assembly, PSII is composed of 1 copy each of membrane proteins PsbA, PsbB, PsbC, PsbD, PsbE, PsbF, PsbH, PsbI, PsbJ, PsbK, PsbL, PsbM, PsbT, PsbX, PsbY, PsbZ, Psb30/Ycf12, at least 3 peripheral proteins of the oxygen-evolving complex and a large number of cofactors. It forms dimeric complexes.

It is found in the plastid. The protein resides in the chloroplast thylakoid membrane. One of the components of the core complex of photosystem II (PSII). PSII is a light-driven water:plastoquinone oxidoreductase that uses light energy to abstract electrons from H(2)O, generating O(2) and a proton gradient subsequently used for ATP formation. It consists of a core antenna complex that captures photons, and an electron transfer chain that converts photonic excitation into a charge separation. This is Photosystem II reaction center protein J from Oryza nivara (Indian wild rice).